We begin with the raw amino-acid sequence, 399 residues long: Cyclic dehypoxanthine futalosine synthase (399 aa).

In terms of domain architecture, Radical SAM core spans 56–288 (ATYIIERNIN…IAIARVFLDN (233 aa)). Positions 70, 74, and 77 each coordinate [4Fe-4S] cluster.

It belongs to the radical SAM superfamily. MqnC family. It depends on [4Fe-4S] cluster as a cofactor.

The enzyme catalyses dehypoxanthine futalosine + S-adenosyl-L-methionine = cyclic dehypoxanthinylfutalosinate + 5'-deoxyadenosine + L-methionine + H(+). It functions in the pathway quinol/quinone metabolism; menaquinone biosynthesis. Its function is as follows. Radical SAM enzyme that catalyzes the cyclization of dehypoxanthine futalosine (DHFL) into cyclic dehypoxanthine futalosine (CDHFL), a step in the biosynthesis of menaquinone (MK, vitamin K2). The protein is Cyclic dehypoxanthine futalosine synthase of Streptomyces coelicolor (strain ATCC BAA-471 / A3(2) / M145).